The following is a 3401-amino-acid chain: Genome polyprotein (3401 aa).

Over 1-104 the chain is Cytoplasmic; that stretch reads MPVRPRNKPK…GRKKRRSMTH (104 aa). The propeptide at 101 to 117 is ER anchor for the capsid protein C, removed in mature form by serine protease NS3; that stretch reads SMTHGIILSLGVTMVIG. Residues 105–125 form a helical membrane-spanning segment; the sequence is GIILSLGVTMVIGASLHHHGG. Residues 126-240 are Extracellular-facing; that stretch reads RYLLNVTHAD…GERQIQRIER (115 aa). N-linked (GlcNAc...) asparagine; by host glycosylation is found at Asn130 and Asn146. The helical transmembrane segment at 241–261 threads the bilayer; sequence WMMRNPFYAAISLLLAWWVGS. Topologically, residues 262-266 are cytoplasmic; sequence DIKQK. Residues 267-281 form a helical membrane-spanning segment; that stretch reads VLIAFLVLAIGPAYS. Topologically, residues 282-725 are extracellular; that stretch reads THCVGIPKRD…HTVFGNVFHS (444 aa). Cystine bridges form between Cys284-Cys311, Cys355-Cys386, Cys373-Cys397, Cys462-Cys564, and Cys581-Cys611. Positions 379–392 are fusion peptide; it reads DRGWGNGCGLFGKG. A helical transmembrane segment spans residues 726-746; sequence IFGGLSWITKIILGGMFLWLG. The Extracellular portion of the chain corresponds to 747 to 753; that stretch reads VNSRNQT. Residues 754–774 traverse the membrane as a helical segment; that stretch reads MCMVLMAVGGILLFMTLGVSG. Topologically, residues 775–1122 are extracellular; that stretch reads EVGCSLDIKR…NVHEEHLVRS (348 aa). Cystine bridges form between Cys778/Cys789, Cys829/Cys916, Cys952/Cys997, Cys1054/Cys1103, Cys1065/Cys1087, and Cys1086/Cys1090. N-linked (GlcNAc...) asparagine; by host glycosylation is found at Asn904 and Asn981. Residues 1123 to 1143 form a helical membrane-spanning segment; it reads WASAGTGMAESSLGLVALFLF. The Cytoplasmic portion of the chain corresponds to 1144–1198; it reads TDIFARKRMTRKFMVIGCLGVLSVMIVGGFTALDLIRYIIVVGQHFASMNHGGDV. A helical transmembrane segment spans residues 1199–1219; it reads AYLAIIAVGKLRPGLLMMYSF. The Lumenal segment spans residues 1220–1287; sequence KAAWSPKERV…PILALLTPLS (68 aa). Residues 1288–1308 traverse the membrane as a helical segment; sequence MEIIRKTGIFACVGLLGLSLW. Over 1309 to 1352 the chain is Cytoplasmic; that stretch reads RGGDTTMRKGMPLLAGAATAASGLTRASLSVVFILCATAASRRS. A helical transmembrane segment spans residues 1353–1373; the sequence is WPIGEIMAIVGIVGTGFGMAV. Over 1374 to 1376 the chain is Lumenal; that stretch reads NDQ. The helical transmembrane segment at 1377–1397 threads the bilayer; that stretch reads ASLAGPMLVFGLIMIVYATLG. At 1398-1447 the chain is on the cytoplasmic side; it reads RADGLTLKRVGDITWEEEAVHSGSSTRYDVTLNEAGEFKLVHEEPVVWSH. The interacts with and activates NS3 protease stretch occupies residues 1404 to 1443; it reads LKRVGDITWEEEAVHSGSSTRYDVTLNEAGEFKLVHEEPV. The helical intramembrane region spans 1448-1468; it reads VVFLVVALIAASVHPIALVVV. Over 1469-2154 the chain is Cytoplasmic; the sequence is TIIWTYGKKH…ASTNAPEAVT (686 aa). Residues 1481 to 1661 form the Peptidase S7 domain; it reads GGVLWDIPIA…GGEGVTEEPL (181 aa). Residues His1532, Asp1556, and Ser1617 each act as charge relay system; for serine protease NS3 activity in the active site. Residues 1665-1821 enclose the Helicase ATP-binding domain; it reads ATMLRKGKLT…ESNGEIEDLR (157 aa). The interval 1669 to 1672 is important for RNA-binding; it reads RKGK. 1678 to 1685 lines the ATP pocket; sequence YHPGAGKT. The short motif at 1769–1772 is the DEAH box element; that stretch reads DEAH. In terms of domain architecture, Helicase C-terminal spans 1816–1995; it reads EIEDLRRDIP…GMVAPLYDVE (180 aa). Residues 2155 to 2175 form a helical membrane-spanning segment; it reads ILLMTGIVVACTLGVGLAFMW. The Lumenal segment spans residues 2176–2181; sequence PKGVDK. The helical intramembrane region spans 2182 to 2200; that stretch reads MSMGMITMSIAGYLMLQGG. Leu2201 is a topological domain (lumenal). A helical transmembrane segment spans residues 2202–2222; it reads TPVQVASVLLIFFIFMVVLIP. Residues 2223–2235 lie on the Cytoplasmic side of the membrane; it reads EAGTQRSINDNKT. Residues 2236 to 2250 form a helical membrane-spanning segment; that stretch reads LYVLLGVALLIGAIT. At 2251-2285 the chain is on the cytoplasmic side; that stretch reads ANEMGYLEKTKRDLLGERVQNEWKLELPMFDLRPG. Positions 2286–2306 form an intramembrane region, helical; the sequence is AAWSIYVGLATLVMPVLDHWI. At 2307–2354 the chain is on the lumenal side; the sequence is RTEYGSLSLTGIAQQASILQAMDKGVPFFKLNMSVIVLLVSVWNNFSM. Residues 2355–2375 traverse the membrane as a helical segment; the sequence is LSVLCGVGLLGVHCAFVLPGL. Residues 2376–2418 are Cytoplasmic-facing; it reads RAQAAKQAQRRVYHGVAKNPVVDGQTTAEIETAPEMPPLYEKK. The helical transmembrane segment at 2419–2439 threads the bilayer; the sequence is LALVLLGVVAIANGVMVRSAF. Residues 2440–2467 lie on the Lumenal side of the membrane; the sequence is SMAETVVLLSAAVGPLLEGNTSAIWNGP. Residues 2468–2488 traverse the membrane as a helical segment; it reads MAVAMAGIMRGNYYAGIGLAY. Topologically, residues 2489–3401 are cytoplasmic; sequence NLWILQSPKR…YSVQEVGTVL (913 aa). Residues 2499-2763 enclose the mRNA cap 0-1 NS5-type MT domain; the sequence is GRSTTMTLGE…DVVFPTGTRN (265 aa). S-adenosyl-L-methionine is bound at residue Ser2554. Phosphoserine is present on Ser2554. The active-site For 2'-O-MTase activity is the Lys2559. Residues Gly2584, Trp2585, Thr2602, Leu2603, Asp2629, and Val2630 each coordinate S-adenosyl-L-methionine. The active-site For 2'-O-MTase activity is Asp2644. Ile2645 provides a ligand contact to S-adenosyl-L-methionine. Residues Lys2680 and Glu2716 each act as for 2'-O-MTase activity in the active site. Tyr2718 lines the S-adenosyl-L-methionine pocket. Residues 2869-2902 carry the Nuclear localization signal motif; sequence RAIMEVVNKWMFDFLAREKAPRICTKEEFINKVR. Zn(2+) contacts are provided by Glu2936, His2940, Cys2945, and Cys2948. Residues 3026–3178 form the RdRp catalytic domain; sequence GIMYADDTAG…APLDERFGLA (153 aa). Zn(2+) contacts are provided by His3213, Cys3229, and Cys3348.

This sequence in the N-terminal section; belongs to the class I-like SAM-binding methyltransferase superfamily. mRNA cap 0-1 NS5-type methyltransferase family. As to quaternary structure, homodimer. Interacts (via N-terminus) with host EXOC1 (via C-terminus); this interaction results in EXOC1 degradation through the proteasome degradation pathway. Forms heterodimers with envelope protein E in the endoplasmic reticulum and Golgi. In terms of assembly, homodimer; in the endoplasmic reticulum and Golgi. Interacts with protein prM. Interacts with non-structural protein 1. As to quaternary structure, homodimer; Homohexamer when secreted. Interacts with envelope protein E. NS1 interacts with NS4B. Interacts with host complement protein CFH; this interaction leads to the degradation of C3. Interacts (via N-terminus) with serine protease NS3. In terms of assembly, forms a heterodimer with serine protease NS3. May form homooligomers. As to quaternary structure, forms a heterodimer with NS2B. Interacts with non-structural protein 2A (via N-terminus). Interacts with NS4B. Interacts with unphosphorylated RNA-directed RNA polymerase NS5; this interaction stimulates RNA-directed RNA polymerase NS5 guanylyltransferase activity. NS3 interacts with host PDCD6IP; this interaction contributes to virion release. Interacts with serine protease NS3. In terms of assembly, homodimer. Interacts with host STAT2; this interaction prevents the establishment of cellular antiviral state. Interacts with serine protease NS3. Interacts with host TRIM23; this interaction leads to NS5 ubiquitination. In terms of processing, specific enzymatic cleavages in vivo yield mature proteins. The nascent capsid protein C contains a C-terminal hydrophobic domain that act as a signal sequence for translocation of prM into the lumen of the ER. Mature capsid protein C is cleaved at a site upstream of this hydrophobic domain by NS3. prM is cleaved in post-Golgi vesicles by a host furin, releasing the mature small envelope protein M, and peptide pr. Non-structural protein 2A-alpha, a C-terminally truncated form of non-structural protein 2A, results from partial cleavage by NS3. Specific enzymatic cleavages in vivo yield mature proteins peptide 2K acts as a signal sequence and is removed from the N-terminus of NS4B by the host signal peptidase in the ER lumen. Signal cleavage at the 2K-4B site requires a prior NS3 protease-mediated cleavage at the 4A-2K site. Post-translationally, cleaved in post-Golgi vesicles by a host furin, releasing the mature small envelope protein M, and peptide pr. This cleavage is incomplete as up to 30% of viral particles still carry uncleaved prM. N-glycosylated. In terms of processing, N-glycosylated. The excreted form is glycosylated and this is required for efficient secretion of the protein from infected cells. Post-translationally, polyubiquitinated; ubiquitination is probably mediated by host TRIM23 and is prerequisite for NS5-STAT2 interaction. NS5 is not ISGylated or sumoylated. Phosphorylated on serines residues. This phosphorylation may trigger NS5 nuclear localization.

It localises to the virion. It is found in the host nucleus. The protein resides in the host cytoplasm. Its subcellular location is the host perinuclear region. The protein localises to the virion membrane. It localises to the host endoplasmic reticulum membrane. It is found in the secreted. It catalyses the reaction Selective hydrolysis of -Xaa-Xaa-|-Yaa- bonds in which each of the Xaa can be either Arg or Lys and Yaa can be either Ser or Ala.. It carries out the reaction RNA(n) + a ribonucleoside 5'-triphosphate = RNA(n+1) + diphosphate. The catalysed reaction is a ribonucleoside 5'-triphosphate + H2O = a ribonucleoside 5'-diphosphate + phosphate + H(+). The enzyme catalyses ATP + H2O = ADP + phosphate + H(+). It catalyses the reaction a 5'-end (5'-triphosphoguanosine)-ribonucleoside in mRNA + S-adenosyl-L-methionine = a 5'-end (N(7)-methyl 5'-triphosphoguanosine)-ribonucleoside in mRNA + S-adenosyl-L-homocysteine. It carries out the reaction a 5'-end (N(7)-methyl 5'-triphosphoguanosine)-ribonucleoside in mRNA + S-adenosyl-L-methionine = a 5'-end (N(7)-methyl 5'-triphosphoguanosine)-(2'-O-methyl-ribonucleoside) in mRNA + S-adenosyl-L-homocysteine + H(+). Its function is as follows. Plays a role in virus budding by binding to the cell membrane and gathering the viral RNA into a nucleocapsid that forms the core of a mature virus particle. During virus entry, may induce genome penetration into the host cytoplasm after hemifusion induced by the surface proteins. Can migrate to the cell nucleus where it modulates host functions. In terms of biological role, inhibits RNA silencing by interfering with host Dicer. Functionally, prevents premature fusion activity of envelope proteins in trans-Golgi by binding to envelope protein E at pH6.0. After virion release in extracellular space, gets dissociated from E dimers. Acts as a chaperone for envelope protein E during intracellular virion assembly by masking and inactivating envelope protein E fusion peptide. prM is the only viral peptide matured by host furin in the trans-Golgi network probably to avoid catastrophic activation of the viral fusion activity in acidic Golgi compartment prior to virion release. prM-E cleavage is inefficient, and many virions are only partially matured. These uncleaved prM would play a role in immune evasion. Its function is as follows. May play a role in virus budding. Exerts cytotoxic effects by activating a mitochondrial apoptotic pathway through M ectodomain. May display a viroporin activity. In terms of biological role, binds to host cell surface receptor and mediates fusion between viral and cellular membranes. Envelope protein is synthesized in the endoplasmic reticulum in the form of heterodimer with protein prM. They play a role in virion budding in the ER, and the newly formed immature particle is covered with 60 spikes composed of heterodimer between precursor prM and envelope protein E. The virion is transported to the Golgi apparatus where the low pH causes dissociation of PrM-E heterodimers and formation of E homodimers. prM-E cleavage is inefficient, and many virions are only partially matured. These uncleaved prM would play a role in immune evasion. Functionally, involved in immune evasion, pathogenesis and viral replication. Once cleaved off the polyprotein, is targeted to three destinations: the viral replication cycle, the plasma membrane and the extracellular compartment. Essential for viral replication. Required for formation of the replication complex and recruitment of other non-structural proteins to the ER-derived membrane structures. Excreted as a hexameric lipoparticle that plays a role against host immune response. Antagonizing the complement function. Binds to the host macrophages and dendritic cells. Inhibits signal transduction originating from Toll-like receptor 3 (TLR3). Component of the viral RNA replication complex that functions in virion assembly and antagonizes the host immune response. Its function is as follows. Required cofactor for the serine protease function of NS3. May have membrane-destabilizing activity and form viroporins. In terms of biological role, displays three enzymatic activities: serine protease, NTPase and RNA helicase. NS3 serine protease, in association with NS2B, performs its autocleavage and cleaves the polyprotein at dibasic sites in the cytoplasm: C-prM, NS2A-NS2B, NS2B-NS3, NS3-NS4A, NS4A-2K and NS4B-NS5. NS3 RNA helicase binds RNA and unwinds dsRNA in the 3' to 5' direction. Also plays a role in virus assembly. Functionally, regulates the ATPase activity of the NS3 helicase activity. NS4A allows NS3 helicase to conserve energy during unwinding. Functions as a signal peptide for NS4B and is required for the interferon antagonism activity of the latter. Its function is as follows. Induces the formation of ER-derived membrane vesicles where the viral replication takes place. Inhibits interferon (IFN)-induced host STAT1 phosphorylation and nuclear translocation, thereby preventing the establishment of cellular antiviral state by blocking the IFN-alpha/beta pathway. In terms of biological role, replicates the viral (+) and (-) RNA genome, and performs the capping of genomes in the cytoplasm. NS5 methylates viral RNA cap at guanine N-7 and ribose 2'-O positions. Besides its role in RNA genome replication, also prevents the establishment of cellular antiviral state by blocking the interferon-alpha/beta (IFN-alpha/beta) signaling pathway. IFN-I induces binding of NS5 to host IFN-activated transcription factor STAT2, preventing its transcriptional activity. Host TRIM23 is the E3 ligase that interacts with and polyubiquitinates NS5 to promote its binding to STAT2 and trigger IFN-I signaling inhibition. The protein is Genome polyprotein of Edge Hill virus (EHV).